Here is a 950-residue protein sequence, read N- to C-terminus: MEKPSTLLVHFDKGSAAMAGEIKADLEGSDVAAKVDAMKRAVMLLLNGETLPTLFITVVRYVLPSEDHTIQKLLLLYLEIIDKRDAAGRGLPEMILICQNLRNNLHHPNEYIRGVTLRFLCRLSEPEVLEPLVPSILENLDHRHHFIRRHALSAISSIYRLPHGDQLVPDAPELVERALASEQDASARRNAFLMLCTCAQERAVAYLLSNADRVAEWPDLLQMAAVDLIRKVCRSPNRADKGRYIKIIIALLSSPSTAVVYECAGALVSLSSAPTAVRAAANTYCELLSSQSDNNVKLIVLDRLNELRTSHRDVMVDVVMDVLRALASPNLDVKRKVLDLVLDLLTARNVEEVVLYLKKEVVKTQAGELEKSGEYRQMLVQAIHACAVEYPEVAGSVVHLLMDFLGDTNVAAAVDVVLFVREIIETNPKLRVSMIQRLIDTFYQIRASRVCSCALWILGEYSLSLSEVENAISTIKQCLGDVPFYTVSEEGEATDSAKPAQPVVNSVTVSSRRPVVLADGTYATQSAATEAISTPSVAPGSLSSTLNLRSLILSGDFFLAAVISCTLTKLVLRLEEVQPSMVEVNKACTGALLVMTSILQLGQSSYLPHPIDNDSYDRIVLCVRLLCNTGDDVRKVWLQSCRQSFAKMLAEKQFRETEEMKAKAQISHAQPDDLIDFYHLKSRRGMSQLELEDEVQDDLKAATGGFTKDAYDANRLNRILQLTGFSDPVYAEAYVTVHHYDIVLDVTIINRTKETLQNLCLELATMGDLKLVDRPQNYTLAPESSKQIRANIKVSSTETGVIFGNIVYETSNVMERSVVVLNDIHIDIMDYISPATCADVTFRNMWAEFEWENKVAVNTVIQNEKEFLDHIIKSTNMKCLTPPSALDGECGFLAANLYAKSVFGEDALVNISIEKQFDGKLSGYIRIRSKTQGIALSLGDKITLKQKGGS.

5 HEAT repeats span residues Pro-92–Pro-126, Glu-127–Gly-164, Thr-275–Arg-312, Asp-313–Val-350, and Glu-392–Lys-429.

In terms of assembly, oligomeric complex that consists of at least the alpha, beta, beta', gamma, delta, epsilon and zeta subunits.

Its subcellular location is the cytoplasm. The protein resides in the golgi apparatus membrane. It is found in the cytoplasmic vesicle. It localises to the COPI-coated vesicle membrane. The coatomer is a cytosolic protein complex that binds to dilysine motifs and reversibly associates with Golgi non-clathrin-coated vesicles, which further mediate biosynthetic protein transport from the ER, via the Golgi up to the trans Golgi network. Coatomer complex is required for budding from Golgi membranes, and is essential for the retrograde Golgi-to-ER transport of dilysine-tagged proteins. This chain is Coatomer subunit beta-2, found in Oryza sativa subsp. japonica (Rice).